A 472-amino-acid polypeptide reads, in one-letter code: Glycosyl hydrolase family 109 protein (472 aa).

Positions 1–35 form a signal peptide, tat-type signal; it reads MSQTPAVSRRLLLGSAAATGALATGIGSAAPVAAA. Residues 68–69, Asp90, 139–142, His145, 159–160, and Asn188 each bind NAD(+); these read NR, WEFH, and EL. Substrate-binding positions include Tyr217, Arg236, 248–251, and Tyr330; that span reads YPMH. NAD(+) is bound at residue Tyr248.

Belongs to the Gfo/Idh/MocA family. Glycosyl hydrolase 109 subfamily. NAD(+) is required as a cofactor. Predicted to be exported by the Tat system. The position of the signal peptide cleavage has not been experimentally proven.

Its function is as follows. Glycosidase. Has no alpha-N-acetylgalactosaminidase activity. This Streptomyces coelicolor (strain ATCC BAA-471 / A3(2) / M145) protein is Glycosyl hydrolase family 109 protein.